The sequence spans 196 residues: Shikimate kinase (196 aa).

Position 21-26 (21-26 (GTGKSR)) interacts with ATP. Residue serine 25 coordinates Mg(2+). 3 residues coordinate substrate: aspartate 43, arginine 67, and glycine 89. Arginine 126 provides a ligand contact to ATP. A substrate-binding site is contributed by arginine 145. Residue arginine 161 participates in ATP binding.

It belongs to the shikimate kinase family. In terms of assembly, monomer. Requires Mg(2+) as cofactor.

The protein resides in the cytoplasm. It carries out the reaction shikimate + ATP = 3-phosphoshikimate + ADP + H(+). Its pathway is metabolic intermediate biosynthesis; chorismate biosynthesis; chorismate from D-erythrose 4-phosphate and phosphoenolpyruvate: step 5/7. In terms of biological role, catalyzes the specific phosphorylation of the 3-hydroxyl group of shikimic acid using ATP as a cosubstrate. The chain is Shikimate kinase from Deinococcus radiodurans (strain ATCC 13939 / DSM 20539 / JCM 16871 / CCUG 27074 / LMG 4051 / NBRC 15346 / NCIMB 9279 / VKM B-1422 / R1).